A 430-amino-acid chain; its full sequence is Bifunctional protein GlmU (430 aa).

Residues 1–227 (MISKTHTFVI…GEEATGINNR (227 aa)) form a pyrophosphorylase region. Residues Lys-25, Gln-74, 79–80 (GT), 104–106 (YGD), Gly-140, Glu-154, Asn-168, and Asn-225 each bind UDP-N-acetyl-alpha-D-glucosamine. Asp-106 contacts Mg(2+). Asn-225 is a binding site for Mg(2+). The segment at 228-248 (NDLIKAEFYFQENKRKIFTDS) is linker. An N-acetyltransferase region spans residues 249-430 (GVTLVAPETV…REKQVTKRIK (182 aa)). Residues Arg-314 and Lys-332 each coordinate UDP-N-acetyl-alpha-D-glucosamine. His-344 functions as the Proton acceptor in the catalytic mechanism. Tyr-347 and Asn-358 together coordinate UDP-N-acetyl-alpha-D-glucosamine. Acetyl-CoA is bound by residues Ala-361, 367-368 (NY), Ala-404, and Arg-421.

In the N-terminal section; belongs to the N-acetylglucosamine-1-phosphate uridyltransferase family. It in the C-terminal section; belongs to the transferase hexapeptide repeat family. Homotrimer. Mg(2+) is required as a cofactor.

It localises to the cytoplasm. It carries out the reaction alpha-D-glucosamine 1-phosphate + acetyl-CoA = N-acetyl-alpha-D-glucosamine 1-phosphate + CoA + H(+). The catalysed reaction is N-acetyl-alpha-D-glucosamine 1-phosphate + UTP + H(+) = UDP-N-acetyl-alpha-D-glucosamine + diphosphate. It participates in nucleotide-sugar biosynthesis; UDP-N-acetyl-alpha-D-glucosamine biosynthesis; N-acetyl-alpha-D-glucosamine 1-phosphate from alpha-D-glucosamine 6-phosphate (route II): step 2/2. The protein operates within nucleotide-sugar biosynthesis; UDP-N-acetyl-alpha-D-glucosamine biosynthesis; UDP-N-acetyl-alpha-D-glucosamine from N-acetyl-alpha-D-glucosamine 1-phosphate: step 1/1. It functions in the pathway bacterial outer membrane biogenesis; LPS lipid A biosynthesis. Functionally, catalyzes the last two sequential reactions in the de novo biosynthetic pathway for UDP-N-acetylglucosamine (UDP-GlcNAc). The C-terminal domain catalyzes the transfer of acetyl group from acetyl coenzyme A to glucosamine-1-phosphate (GlcN-1-P) to produce N-acetylglucosamine-1-phosphate (GlcNAc-1-P), which is converted into UDP-GlcNAc by the transfer of uridine 5-monophosphate (from uridine 5-triphosphate), a reaction catalyzed by the N-terminal domain. In Wolbachia pipientis wMel, this protein is Bifunctional protein GlmU.